The following is a 156-amino-acid chain: Transcriptional repressor NrdR (156 aa).

A zinc finger spans residues 3–34 (CPFCGSMDTRVLDSRPTLDGAAIRRRRECISC). Residues 49 to 139 (VLVIKKDGRR…VYRDFREVDQ (91 aa)) form the ATP-cone domain.

Belongs to the NrdR family. Zn(2+) is required as a cofactor.

In terms of biological role, negatively regulates transcription of bacterial ribonucleotide reductase nrd genes and operons by binding to NrdR-boxes. In Thermotoga neapolitana (strain ATCC 49049 / DSM 4359 / NBRC 107923 / NS-E), this protein is Transcriptional repressor NrdR.